An 884-amino-acid polypeptide reads, in one-letter code: Alanine--tRNA ligase (884 aa).

Zn(2+)-binding residues include H565, H569, C674, and H678.

It belongs to the class-II aminoacyl-tRNA synthetase family. Requires Zn(2+) as cofactor.

It localises to the cytoplasm. It catalyses the reaction tRNA(Ala) + L-alanine + ATP = L-alanyl-tRNA(Ala) + AMP + diphosphate. Catalyzes the attachment of alanine to tRNA(Ala) in a two-step reaction: alanine is first activated by ATP to form Ala-AMP and then transferred to the acceptor end of tRNA(Ala). Also edits incorrectly charged Ser-tRNA(Ala) and Gly-tRNA(Ala) via its editing domain. The polypeptide is Alanine--tRNA ligase (Xanthobacter autotrophicus (strain ATCC BAA-1158 / Py2)).